Here is a 197-residue protein sequence, read N- to C-terminus: Imidazoleglycerol-phosphate dehydratase (197 aa).

The protein belongs to the imidazoleglycerol-phosphate dehydratase family.

It is found in the cytoplasm. The catalysed reaction is D-erythro-1-(imidazol-4-yl)glycerol 3-phosphate = 3-(imidazol-4-yl)-2-oxopropyl phosphate + H2O. Its pathway is amino-acid biosynthesis; L-histidine biosynthesis; L-histidine from 5-phospho-alpha-D-ribose 1-diphosphate: step 6/9. In Azorhizobium caulinodans (strain ATCC 43989 / DSM 5975 / JCM 20966 / LMG 6465 / NBRC 14845 / NCIMB 13405 / ORS 571), this protein is Imidazoleglycerol-phosphate dehydratase.